The primary structure comprises 375 residues: Tyrosine--tRNA ligase (375 aa).

L-tyrosine-binding residues include Tyr37, Tyr168, Gln172, Asp175, and Gln190. Residues 251–255 carry the 'KMSKS' region motif; it reads KMSKS. An ATP-binding site is contributed by Lys254.

Belongs to the class-I aminoacyl-tRNA synthetase family. TyrS type 4 subfamily. Homodimer.

Its subcellular location is the cytoplasm. It carries out the reaction tRNA(Tyr) + L-tyrosine + ATP = L-tyrosyl-tRNA(Tyr) + AMP + diphosphate + H(+). Catalyzes the attachment of tyrosine to tRNA(Tyr) in a two-step reaction: tyrosine is first activated by ATP to form Tyr-AMP and then transferred to the acceptor end of tRNA(Tyr). The sequence is that of Tyrosine--tRNA ligase from Pyrococcus abyssi (strain GE5 / Orsay).